We begin with the raw amino-acid sequence, 574 residues long: MGTSSGSNHPHQMLPPRQQQRSGGGLETALSLVSSDQEPRRESPAESASSQETWPLGDTVAGKKSMSQKTEPDSMEQTVNVMHHVSNADKVSVRDIARERVELVAERMHRLPDEFLDELKNGLKSILEGNVAQSVDEFMFLQKVVQSRTDLSSVTLVRAHRVQLEILVAINTGIQAFLHPNISLSQPSLIEIFVYKRCRNIACQNQLPADDCYCDICTNRKGFCNLCMCTICNKFDFSVNTCRWIGCDLCSHWTHTDCAIRDGQITTGSSAKNNTSGPGEIVFKCRACNRTSELLGWVKDVFQHCAPNWDRESLMKELDFVSRIFRGSEDQRGRKLFWKCEELIDKIKGGLAEATAAKLILMFFQEIESDSAKSFENGEGGRLMAPQDACNRIAEVVQETLRKMEIVAEEKMRMFKKARMALETCDRELEDKAKEVSELKAERQKKKLQIDELERIVRLKQAEADMFQLKANEAKREADRLQRIVLAKMDKSEEEYASNYLKQRLSEAEAEKQYLFEKIKLQENSRVASQSSGGGGDPSQVMMYSKIRDLLQGYNLSPKVDPQLNERNPFRSNP.

Composition is skewed to polar residues over residues 1–10 (MGTSSGSNHP) and 65–76 (SMSQKTEPDSME). A disordered region spans residues 1–76 (MGTSSGSNHP…SQKTEPDSME (76 aa)). Residues 226-291 (LCMCTICNKF…VFKCRACNRT (66 aa)) form a PHD-type zinc finger. Residues 416–524 (KKARMALETC…LFEKIKLQEN (109 aa)) adopt a coiled-coil conformation.

Self-interacts. Interacts with OBE1, OBE3 and OBE4. Binds to VPg of pea seed borne mosaic virus (PSbMV), turnip mosaic virus (TuMV) and lettuce mosaic virus (LMV), but not with VPg of tobacco etch virus (TEV), cowpea mosaic virus (CPMV), tomato black ring virus (TBRV) and grapevine fan leaf virus (GFLV). In terms of tissue distribution, expressed in roots, seedlings, stems, leaves, flowers and siliques, especially in the vasculature.

The protein localises to the nucleus. Probable transcription factor that acts together with OBE1 for the maintenance and/or establishment of both the shoot and root meristems, probably by controlling the expression of the meristem genes such as WUS, PLT1 and PLT2 and of genes required for auxin responses. Promotes cell meristematic activity via the WUSCHEL-CLAVATA pathway. Involved in the development of the basal pole and in auxin-mediated root and vascular development in the embryo. Confers sensitivity to turnip mosaic virus (TuMV) probably by promoting viral movement and multiplication via interaction with TuMV VPg. This Arabidopsis thaliana (Mouse-ear cress) protein is Protein OBERON 2.